Reading from the N-terminus, the 126-residue chain is Protein ApaG (126 aa).

The ApaG domain maps to 2-126 (DVIQPCIKIQ…FRLAIPNVLN (125 aa)).

This chain is Protein ApaG, found in Vibrio campbellii (strain ATCC BAA-1116).